A 170-amino-acid chain; its full sequence is Small ribosomal subunit protein uS13 (170 aa).

Residues Val128–Arg140 show a composition bias toward basic residues. The disordered stretch occupies residues Val128 to Glu170.

It belongs to the universal ribosomal protein uS13 family. Part of the 30S ribosomal subunit. Forms a loose heterodimer with protein S19. Forms two bridges to the 50S subunit in the 70S ribosome.

Its function is as follows. Located at the top of the head of the 30S subunit, it contacts several helices of the 16S rRNA. In the 70S ribosome it contacts the 23S rRNA (bridge B1a) and protein L5 of the 50S subunit (bridge B1b), connecting the 2 subunits; these bridges are implicated in subunit movement. This Natronomonas pharaonis (strain ATCC 35678 / DSM 2160 / CIP 103997 / JCM 8858 / NBRC 14720 / NCIMB 2260 / Gabara) (Halobacterium pharaonis) protein is Small ribosomal subunit protein uS13.